Consider the following 213-residue polypeptide: Orotate phosphoribosyltransferase (213 aa).

K26 is a binding site for 5-phospho-alpha-D-ribose 1-diphosphate. An orotate-binding site is contributed by 34 to 35 (FF). Residues 72 to 73 (YK), R99, K100, K103, H105, and 124 to 132 (DDVITAGTA) each bind 5-phospho-alpha-D-ribose 1-diphosphate. The orotate site is built by T128 and R156.

It belongs to the purine/pyrimidine phosphoribosyltransferase family. PyrE subfamily. As to quaternary structure, homodimer. Mg(2+) serves as cofactor.

The catalysed reaction is orotidine 5'-phosphate + diphosphate = orotate + 5-phospho-alpha-D-ribose 1-diphosphate. It functions in the pathway pyrimidine metabolism; UMP biosynthesis via de novo pathway; UMP from orotate: step 1/2. In terms of biological role, catalyzes the transfer of a ribosyl phosphate group from 5-phosphoribose 1-diphosphate to orotate, leading to the formation of orotidine monophosphate (OMP). In Haemophilus influenzae (strain 86-028NP), this protein is Orotate phosphoribosyltransferase.